Reading from the N-terminus, the 187-residue chain is MGNKQTIFTEEQLDNYQDCTFFNKKDILKLHARFYELAPNLVPMDYRKSPIVHVPMSLIIQMPELRENPFKERIVEAFSEDGEGNLTFNDFVDMFSVLCESAPRELKANYAFKIYDFNTDNFICKEDLELTLARLTKSELDEDEVVLVCDKVIEEADLDGDGKLGFADFEDMIAKAPDFLSTFHIRI.

EF-hand domains lie at 66 to 101 (RENPFKERIVEAFSEDGEGNLTFNDFVDMFSVLCES), 103 to 138 (PRELKANYAFKIYDFNTDNFICKEDLELTLARLTKS), and 144 to 179 (EVVLVCDKVIEEADLDGDGKLGFADFEDMIAKAPDF). Asp-116, Asn-118, Asp-120, Asp-127, Asp-157, Asp-159, Asp-161, Lys-163, and Asp-168 together coordinate Ca(2+).

Monomer. Homodimer. Interacts with WHRN and MYO7A. Interacts with ITGA2B (via C-terminus cytoplasmic tail region); the interactions are stabilized/increased in a calcium and magnesium-dependent manner. Interacts with ITGA7 (via C-terminus cytoplasmic tail region); the interactions are stabilized/increased in a calcium and magnesium-dependent manner. Interacts with TMC1. Interacts with TMC2.

It localises to the cytoplasm. The protein localises to the cell projection. Its subcellular location is the stereocilium. The protein resides in the photoreceptor inner segment. It is found in the cilium. It localises to the photoreceptor outer segment. The protein localises to the cell membrane. Its subcellular location is the sarcolemma. Functionally, calcium- and integrin-binding protein that plays a role in intracellular calcium homeostasis. Acts as an auxiliary subunit of the sensory mechanoelectrical transduction (MET) channel in hair cells. Essential for mechanoelectrical transduction (MET) currents in auditory hair cells and thereby required for hearing. Regulates the function of hair cell mechanotransduction by controlling the distribution of transmembrane channel-like proteins TMC1 and TMC2, and by regulating the function of the MET channels in hair cells. Required for the maintenance of auditory hair cell stereocilia bundle morphology and function and for hair-cell survival in the cochlea. Critical for proper photoreceptor cell maintenance and function. Plays a role in intracellular calcium homeostasis by decreasing ATP-induced calcium release. This chain is Calcium and integrin-binding family member 2 (Cib2), found in Rattus norvegicus (Rat).